The chain runs to 341 residues: MEQKRPQLKARVDGDYGEFVLEPLARGYGVTIGNPIRRILMSSIPGTAVTSVYIEDVLHEFSTIPGVREDVIRLILNLKELVVKFHAPGPKTLTLRAQGEGEVRASAFEVPTDAEIVNPDLVIANLAEDGKLVMEVRVEEGEGYVSADKHATKDRINSIPVDAMFSPVRRVAYHVENTRVGQQTDLDRLILRVWTDGSAGPQEALDKAVEILRDELSVFGNVEPMPALESSYAAATPAAVYDPATATLPASVYDSPRQPDLGSLSINPQPFPTDQDTPRVTLEGLGLTTRVLHSLKEEGIDSVDALCALSDRDLKKVPGIGERSLDEIKQQLAQFGLALRD.

The interval 1-223 (MEQKRPQLKA…DELSVFGNVE (223 aa)) is alpha N-terminal domain (alpha-NTD). The segment at 268–341 (PQPFPTDQDT…LAQFGLALRD (74 aa)) is alpha C-terminal domain (alpha-CTD).

It belongs to the RNA polymerase alpha chain family. As to quaternary structure, homodimer. The RNAP catalytic core consists of 2 alpha, 1 beta, 1 beta' and 1 omega subunit. When a sigma factor is associated with the core the holoenzyme is formed, which can initiate transcription.

It catalyses the reaction RNA(n) + a ribonucleoside 5'-triphosphate = RNA(n+1) + diphosphate. DNA-dependent RNA polymerase catalyzes the transcription of DNA into RNA using the four ribonucleoside triphosphates as substrates. The protein is DNA-directed RNA polymerase subunit alpha of Deinococcus radiodurans (strain ATCC 13939 / DSM 20539 / JCM 16871 / CCUG 27074 / LMG 4051 / NBRC 15346 / NCIMB 9279 / VKM B-1422 / R1).